Consider the following 481-residue polypeptide: Small ribosomal subunit protein bS1 (481 aa).

S1 motif domains lie at 36–105, 123–188, 209–277, and 294–363; these read GDIV…LSKK, DEAV…LSRR, GTIR…LSLK, and GQIV…LSLK. The tract at residues 429–467 is disordered; the sequence is TAQMEKFAAAEAAGRGADDQSSASSAPSEKTAGGSLASD. A compositionally biased stretch (low complexity) spans 437–456; it reads AAEAAGRGADDQSSASSAPS.

The protein belongs to the bacterial ribosomal protein bS1 family.

Binds mRNA; thus facilitating recognition of the initiation point. It is needed to translate mRNA with a short Shine-Dalgarno (SD) purine-rich sequence. This is Small ribosomal subunit protein bS1 (rpsA) from Mycobacterium tuberculosis (strain CDC 1551 / Oshkosh).